A 252-amino-acid polypeptide reads, in one-letter code: Transcriptional regulatory protein HptR (252 aa).

In terms of domain architecture, Response regulatory spans 3–118; it reads KVVICDDERI…QLEVILGRLV (116 aa). Asp55 is subject to 4-aspartylphosphate. One can recognise an HTH araC/xylS-type domain in the interval 153-250; sequence NQIVDQIKQS…QMAPSDYCKQ (98 aa). 2 consecutive DNA-binding regions (H-T-H motif) follow at residues 170-191 and 217-240; these read SDLI…KDHV and HYEI…KKYL.

Phosphorylated by HptS.

It localises to the cytoplasm. Functionally, member of the two-component regulatory system HptS/HptR that regulates genes involved in hexose phosphate transport system in response to changes in extracellular phosphate sources. Activates uhpT expression to facilitate glucose-6-phosphate/G6P utilization by directly binding to its promoter. Antagonizes CcpA-dependent transcription of a subset of CcpA-regulated genes involved in antibiotic susceptibility. This Staphylococcus aureus (strain bovine RF122 / ET3-1) protein is Transcriptional regulatory protein HptR (hptR).